The following is an 894-amino-acid chain: DNA mismatch repair protein MutS (894 aa).

An ATP-binding site is contributed by 629 to 636 (GPNMGGKS). The tract at residues 819 to 840 (TPTPQLDLFAPPPHPDTSDDDE) is disordered.

This sequence belongs to the DNA mismatch repair MutS family.

Its function is as follows. This protein is involved in the repair of mismatches in DNA. It is possible that it carries out the mismatch recognition step. This protein has a weak ATPase activity. This is DNA mismatch repair protein MutS from Cupriavidus pinatubonensis (strain JMP 134 / LMG 1197) (Cupriavidus necator (strain JMP 134)).